We begin with the raw amino-acid sequence, 366 residues long: PTI1-like tyrosine-protein kinase 2 (366 aa).

Over residues 8 to 23 the composition is skewed to basic and acidic residues; it reads GDKKGDSDLSNEEVHL. A disordered region spans residues 8-50; sequence GDKKGDSDLSNEEVHLKSPWQNSEANQKNQKPQAVVKPEAQKE. Polar residues predominate over residues 26–39; sequence PWQNSEANQKNQKP. One can recognise a Protein kinase domain in the interval 71 to 353; sequence FGSKSLIGEG…IVVKALQPLL (283 aa). Residues 77–85 and K99 contribute to the ATP site; that span reads IGEGSYGRV. Residue D203 is the Proton acceptor of the active site.

The protein belongs to the protein kinase superfamily. Tyr protein kinase family. As to quaternary structure, interacts with OXI1. In terms of processing, autophosphorylated and phosphorylated by OXI1.

It carries out the reaction L-tyrosyl-[protein] + ATP = O-phospho-L-tyrosyl-[protein] + ADP + H(+). Strongly activated in response to phosphatidic acid (PA) and xylanase in a OXI1- and PDK1-dependent manner, and, to a lesser extent, by hydrogen peroxide and flagellin in a OXI1-dependent manner. Probable tyrosine-protein kinase involved in oxidative burst-mediated signaling leading to specific genes expression. The sequence is that of PTI1-like tyrosine-protein kinase 2 (PTI12) from Arabidopsis thaliana (Mouse-ear cress).